The following is a 246-amino-acid chain: Orotidine 5'-phosphate decarboxylase (246 aa).

Substrate is bound by residues Asp22, Lys44, Asp71 to Thr80, Thr131, Arg192, Gln201, Gly221, and Arg222. Lys73 (proton donor) is an active-site residue.

Belongs to the OMP decarboxylase family. Type 1 subfamily. As to quaternary structure, homodimer.

The catalysed reaction is orotidine 5'-phosphate + H(+) = UMP + CO2. It participates in pyrimidine metabolism; UMP biosynthesis via de novo pathway; UMP from orotate: step 2/2. Catalyzes the decarboxylation of orotidine 5'-monophosphate (OMP) to uridine 5'-monophosphate (UMP). This Enterobacter sp. (strain 638) protein is Orotidine 5'-phosphate decarboxylase.